We begin with the raw amino-acid sequence, 200 residues long: Peroxiredoxin (200 aa).

The region spanning 6–166 (ARIGHLAPGF…ILRLVQAFQF (161 aa)) is the Thioredoxin domain. The active-site Cysteine sulfenic acid (-SOH) intermediate is the C52.

This sequence belongs to the peroxiredoxin family. AhpC/Prx1 subfamily. In terms of assembly, homodimer; disulfide-linked, upon oxidation.

It carries out the reaction a hydroperoxide + [thioredoxin]-dithiol = an alcohol + [thioredoxin]-disulfide + H2O. Functionally, thiol-specific peroxidase that catalyzes the reduction of hydrogen peroxide and organic hydroperoxides to water and alcohols, respectively. Plays a role in cell protection against oxidative stress by detoxifying peroxides and as sensor of hydrogen peroxide-mediated signaling events. The polypeptide is Peroxiredoxin (Oncorhynchus mykiss (Rainbow trout)).